Here is a 92-residue protein sequence, read N- to C-terminus: Large ribosomal subunit protein eL31 (92 aa).

S2 carries the post-translational modification N-acetylserine.

It belongs to the eukaryotic ribosomal protein eL31 family. Part of the 50S ribosomal subunit.

Functionally, binds to the 23S rRNA. Located at the polypeptide exit tunnel on the outside of the subunit. The sequence is that of Large ribosomal subunit protein eL31 (rpl31e) from Haloarcula marismortui (strain ATCC 43049 / DSM 3752 / JCM 8966 / VKM B-1809) (Halobacterium marismortui).